A 362-amino-acid polypeptide reads, in one-letter code: Holliday junction branch migration complex subunit RuvB (362 aa).

The interval 1–27 (MANIEKTEFHVPAPVSAAGNQKSSLGN) is disordered. Residues 13–206 (APVSAAGNQK…FGFTAQMEFY (194 aa)) form a large ATPase domain (RuvB-L) region. ATP-binding positions include Leu45, Arg46, Gly87, Lys90, Thr91, Thr92, 153–155 (EDF), Arg196, Tyr206, and Arg243. Thr91 contributes to the Mg(2+) binding site. The segment at 207–277 (EVEDLTKVVV…AAQAALVVFD (71 aa)) is small ATPAse domain (RuvB-S). The segment at 280-362 (EMGLDRLDRA…EPPEGIIGSL (83 aa)) is head domain (RuvB-H). Arg335 and Arg340 together coordinate DNA.

It belongs to the RuvB family. As to quaternary structure, homohexamer. Forms an RuvA(8)-RuvB(12)-Holliday junction (HJ) complex. HJ DNA is sandwiched between 2 RuvA tetramers; dsDNA enters through RuvA and exits via RuvB. An RuvB hexamer assembles on each DNA strand where it exits the tetramer. Each RuvB hexamer is contacted by two RuvA subunits (via domain III) on 2 adjacent RuvB subunits; this complex drives branch migration. In the full resolvosome a probable DNA-RuvA(4)-RuvB(12)-RuvC(2) complex forms which resolves the HJ.

The protein resides in the cytoplasm. The enzyme catalyses ATP + H2O = ADP + phosphate + H(+). In terms of biological role, the RuvA-RuvB-RuvC complex processes Holliday junction (HJ) DNA during genetic recombination and DNA repair, while the RuvA-RuvB complex plays an important role in the rescue of blocked DNA replication forks via replication fork reversal (RFR). RuvA specifically binds to HJ cruciform DNA, conferring on it an open structure. The RuvB hexamer acts as an ATP-dependent pump, pulling dsDNA into and through the RuvAB complex. RuvB forms 2 homohexamers on either side of HJ DNA bound by 1 or 2 RuvA tetramers; 4 subunits per hexamer contact DNA at a time. Coordinated motions by a converter formed by DNA-disengaged RuvB subunits stimulates ATP hydrolysis and nucleotide exchange. Immobilization of the converter enables RuvB to convert the ATP-contained energy into a lever motion, pulling 2 nucleotides of DNA out of the RuvA tetramer per ATP hydrolyzed, thus driving DNA branch migration. The RuvB motors rotate together with the DNA substrate, which together with the progressing nucleotide cycle form the mechanistic basis for DNA recombination by continuous HJ branch migration. Branch migration allows RuvC to scan DNA until it finds its consensus sequence, where it cleaves and resolves cruciform DNA. The protein is Holliday junction branch migration complex subunit RuvB of Corynebacterium diphtheriae (strain ATCC 700971 / NCTC 13129 / Biotype gravis).